Here is a 510-residue protein sequence, read N- to C-terminus: 2,3-bisphosphoglycerate-independent phosphoglycerate mutase (510 aa).

Mn(2+) contacts are provided by D13 and S63. The active-site Phosphoserine intermediate is S63. Substrate is bound by residues H124, R154–D155, R186, R192, R262–R265, and K334. D401, H405, D442, H443, and H461 together coordinate Mn(2+).

Belongs to the BPG-independent phosphoglycerate mutase family. As to quaternary structure, monomer. The cofactor is Mn(2+).

The enzyme catalyses (2R)-2-phosphoglycerate = (2R)-3-phosphoglycerate. It participates in carbohydrate degradation; glycolysis; pyruvate from D-glyceraldehyde 3-phosphate: step 3/5. In terms of biological role, catalyzes the interconversion of 2-phosphoglycerate and 3-phosphoglycerate. In Vibrio parahaemolyticus serotype O3:K6 (strain RIMD 2210633), this protein is 2,3-bisphosphoglycerate-independent phosphoglycerate mutase.